Here is a 245-residue protein sequence, read N- to C-terminus: Orotidine 5'-phosphate decarboxylase (245 aa).

Residues D22, K44, 71-80 (DLKFHDIPNT), T131, R192, Q201, G221, and R222 contribute to the substrate site. Catalysis depends on K73, which acts as the Proton donor.

Belongs to the OMP decarboxylase family. Type 1 subfamily. Homodimer.

It carries out the reaction orotidine 5'-phosphate + H(+) = UMP + CO2. It participates in pyrimidine metabolism; UMP biosynthesis via de novo pathway; UMP from orotate: step 2/2. Functionally, catalyzes the decarboxylation of orotidine 5'-monophosphate (OMP) to uridine 5'-monophosphate (UMP). In Escherichia coli (strain 55989 / EAEC), this protein is Orotidine 5'-phosphate decarboxylase.